The chain runs to 177 residues: ATP synthase subunit delta (177 aa).

It belongs to the ATPase delta chain family. As to quaternary structure, F-type ATPases have 2 components, F(1) - the catalytic core - and F(0) - the membrane proton channel. F(1) has five subunits: alpha(3), beta(3), gamma(1), delta(1), epsilon(1). F(0) has three main subunits: a(1), b(2) and c(10-14). The alpha and beta chains form an alternating ring which encloses part of the gamma chain. F(1) is attached to F(0) by a central stalk formed by the gamma and epsilon chains, while a peripheral stalk is formed by the delta and b chains.

It is found in the cell membrane. In terms of biological role, f(1)F(0) ATP synthase produces ATP from ADP in the presence of a proton or sodium gradient. F-type ATPases consist of two structural domains, F(1) containing the extramembraneous catalytic core and F(0) containing the membrane proton channel, linked together by a central stalk and a peripheral stalk. During catalysis, ATP synthesis in the catalytic domain of F(1) is coupled via a rotary mechanism of the central stalk subunits to proton translocation. Its function is as follows. This protein is part of the stalk that links CF(0) to CF(1). It either transmits conformational changes from CF(0) to CF(1) or is implicated in proton conduction. This chain is ATP synthase subunit delta, found in Macrococcus caseolyticus (strain JCSC5402) (Macrococcoides caseolyticum).